We begin with the raw amino-acid sequence, 137 residues long: Chaperone protein YscB (137 aa).

Interacts with SycN to form a complex which specifically binds to YopN.

The protein localises to the cytoplasm. The protein resides in the cell inner membrane. Functionally, functions as a specific chaperone for YopN. It could facilitate the secretion and the subsequent translocation of YopN. The polypeptide is Chaperone protein YscB (yscB) (Yersinia enterocolitica).